The primary structure comprises 260 residues: Exosome complex component Rrp4 (260 aa).

In terms of domain architecture, S1 motif spans 59-128; the sequence is NDVVIGIVIV…NSMKVELALR (70 aa). Residues 136 to 194 form the KH domain; sequence KTGQIVEVEPVKVPRVIGHGGSMISMLKKETNCSIFVGQNGRIWIDGKDDDVELLSKAL.

It belongs to the RRP4 family. As to quaternary structure, component of the archaeal exosome complex. Forms a trimer of Rrp4 and/or Csl4 subunits. The trimer associates with a hexameric ring-like arrangement composed of 3 Rrp41-Rrp42 heterodimers.

It localises to the cytoplasm. In terms of biological role, non-catalytic component of the exosome, which is a complex involved in RNA degradation. Increases the RNA binding and the efficiency of RNA degradation. Confers strong poly(A) specificity to the exosome. In Methanosarcina barkeri (strain Fusaro / DSM 804), this protein is Exosome complex component Rrp4.